A 421-amino-acid polypeptide reads, in one-letter code: Nacrein-like protein M (421 aa).

An N-linked (GlcNAc...) asparagine glycan is attached at asparagine 27. Positions 33 to 420 (AGFSYDRSIC…KNKVTVYKSF (388 aa)) constitute an Alpha-carbonic anhydrase domain. Positions 132, 134, and 157 each coordinate Zn(2+). Residues 197–206 (DGFGDEPDDE) show a composition bias toward acidic residues. The segment at 197–303 (DGFGDEPDDE…GENGHKHGCR (107 aa)) is disordered. Positions 207 to 219 (ECKRILKGHHPDN) are enriched in basic and acidic residues. A compositionally biased stretch (low complexity) spans 220–295 (NENGNGDNGN…NNGDNGNNGE (76 aa)). 24 consecutive repeat copies span residues 225–227 (GDN), 228–230 (GNN), 231–233 (GYN), 234–236 (GDN), 237–239 (GNN), 240–242 (GDN), 243–245 (GNN), 246–248 (GYN), 249–251 (GDN), 252–254 (GNN), 255–257 (GDN), 258–260 (GNN), 261–263 (GYN), 264–266 (GDN), 267–269 (GNN), 270–272 (GDN), 273–275 (GNN), 276–278 (GEN), 279–281 (GNN), 282–284 (GEN), 285–287 (GNN), 288–290 (GDN), 291–292 (GN), and 294–296 (GEN). Residues 225-296 (GDNGNNGYNG…NGDNGNNGEN (72 aa)) form a 24 X 3 AA approximate tandem repeats of G-X-N region. 361–362 (TT) provides a ligand contact to substrate.

It belongs to the alpha-carbonic anhydrase family. Homooligomer; disulfide-linked. May also be disulfide-linked to insoluble organic matrix. It depends on Zn(2+) as a cofactor. In terms of tissue distribution, expressed in the mantle.

The protein localises to the secreted. The protein resides in the extracellular space. Its subcellular location is the extracellular matrix. The catalysed reaction is hydrogencarbonate + H(+) = CO2 + H2O. Its function is as follows. Acts as a negative regulator for calcification in the shells of mollusks. May function both as a calcium concentrator and as a carbonic anhydrase required for production of carbonate ions, which are assembled to CaCO(3) at mineralization sites. Is important for shell formation in both the calcitic prismatic layer and the aragonitic nacreous layerr. Shows inhibitory activity of crystal formation when present in free state but, when attached to the insoluble matrix, may regulate the form and size of aragonite crystal. The protein is Nacrein-like protein M of Pinctada maxima (Silver-lipped pearl oyster).